The following is a 362-amino-acid chain: Ribosome-binding ATPase YchF (362 aa).

In terms of domain architecture, OBG-type G spans 3 to 255 (FKCGIIGLPN…MNEDEQKYFM (253 aa)). An ATP-binding site is contributed by 12–17 (NVGKST). 2 residues coordinate Mg(2+): S16 and T36. The TGS domain occupies 277-360 (NLITFFTAGI…QDGDIINFLF (84 aa)).

This sequence belongs to the TRAFAC class OBG-HflX-like GTPase superfamily. OBG GTPase family. YchF/OLA1 subfamily. The cofactor is Mg(2+).

Functionally, ATPase that binds to both the 70S ribosome and the 50S ribosomal subunit in a nucleotide-independent manner. This is Ribosome-binding ATPase YchF from Buchnera aphidicola subsp. Schizaphis graminum (strain Sg).